The primary structure comprises 193 residues: uncharacterized protein (193 aa).

The interval 1–84 (MTSKCSKWHE…RRSNQRIQLY (84 aa)) is disordered. Positions 43–78 (SSPRRSSPRRSPRRSSPRRSSPRRSSPRRSSPRRSN) are enriched in basic residues.

It belongs to the IIV-6 378R family.

This is an uncharacterized protein from Invertebrate iridescent virus 6 (IIV-6).